Consider the following 567-residue polypeptide: Geranylgeranyl transferase type-2 subunit alpha (567 aa).

PFTA repeat units lie at residues 44 to 78 (LDES…QLEV), 88 to 122 (LVKA…RLPE), 124 to 158 (NWAR…QAAV), 159 to 193 (PPAE…QLHP), 207 to 241 (VLLK…RADP), and 363 to 397 (VLQS…ALDP). Phosphoserine is present on Ser98. 5 LRR repeats span residues 442 to 463 (EVRV…EQLL), 464 to 486 (LVTH…AALR), 487 to 508 (CLEV…TNLP), 509 to 530 (RLQE…QPLT), and 534 to 555 (RLTL…SEHL).

It belongs to the protein prenyltransferase subunit alpha family. In terms of assembly, heterotrimer composed of RABGGTA, RABGGTB and CHM; within this trimer, RABGGTA and RABGGTB form the catalytic component B, while CHM (component A) mediates peptide substrate binding. The Rab GGTase dimer (RGGT) interacts with CHM (component A) prior to Rab protein binding; the association is stabilized by geranylgeranyl pyrophosphate (GGpp). The CHM:RGGT:Rab complex is destabilized by GGpp. Interacts with non-phosphorylated form of RAB8A; phosphorylation of RAB8A at 'Thr-72' disrupts this interaction.

It catalyses the reaction geranylgeranyl diphosphate + L-cysteinyl-[protein] = S-geranylgeranyl-L-cysteinyl-[protein] + diphosphate. With respect to regulation, the enzymatic reaction requires the aid of a Rab escort protein (also called component A), such as CHM. Its function is as follows. Catalyzes the transfer of a geranylgeranyl moiety from geranylgeranyl diphosphate to both cysteines of Rab proteins with the C-terminal sequence -XXCC, -XCXC and -CCXX, such as RAB1A, RAB3A, RAB5A and RAB7A. The polypeptide is Geranylgeranyl transferase type-2 subunit alpha (RABGGTA) (Bos taurus (Bovine)).